The sequence spans 371 residues: GDSL esterase/lipase At3g27950 (371 aa).

Positions 1-23 are cleaved as a signal peptide; sequence MAISKITLAIIVLLLGFTEKLSA. The active-site Nucleophile is S39. Residues N82, N143, N178, N194, and N315 are each glycosylated (N-linked (GlcNAc...) asparagine). Active-site residues include D334 and H337.

The protein belongs to the 'GDSL' lipolytic enzyme family.

Its subcellular location is the secreted. The sequence is that of GDSL esterase/lipase At3g27950 from Arabidopsis thaliana (Mouse-ear cress).